Reading from the N-terminus, the 213-residue chain is Orotate phosphoribosyltransferase (213 aa).

Lys26 provides a ligand contact to 5-phospho-alpha-D-ribose 1-diphosphate. Residue 34–35 coordinates orotate; that stretch reads FF. 5-phospho-alpha-D-ribose 1-diphosphate contacts are provided by residues 72–73, Arg99, Lys100, Lys103, His105, and 124–132; these read YK and DDVITAGTA. Orotate is bound by residues Thr128 and Arg156.

Belongs to the purine/pyrimidine phosphoribosyltransferase family. PyrE subfamily. Homodimer. Requires Mg(2+) as cofactor.

The catalysed reaction is orotidine 5'-phosphate + diphosphate = orotate + 5-phospho-alpha-D-ribose 1-diphosphate. It participates in pyrimidine metabolism; UMP biosynthesis via de novo pathway; UMP from orotate: step 1/2. In terms of biological role, catalyzes the transfer of a ribosyl phosphate group from 5-phosphoribose 1-diphosphate to orotate, leading to the formation of orotidine monophosphate (OMP). This chain is Orotate phosphoribosyltransferase, found in Vibrio vulnificus (strain YJ016).